A 341-amino-acid polypeptide reads, in one-letter code: Vacuolar morphogenesis protein 7 homolog (341 aa).

Residues 1 to 115 (MALKIKIPET…KFLNIKDESE (115 aa)) enclose the PX domain. Positions 214-233 (NSPVAPPSASSQLNSSNPSS) are enriched in low complexity. Residues 214-265 (NSPVAPPSASSQLNSSNPSSPFRPLSASTDKQSNTSLNRVLGKNRMPETQTT) are disordered. Residues 239–251 (SASTDKQSNTSLN) show a composition bias toward polar residues. In terms of domain architecture, t-SNARE coiled-coil homology spans 278-340 (NQTMEDQDMQ…HRTRAGLRKL (63 aa)).

Possibly multimeric.

The protein localises to the vacuole. Essential for proper morphogenesis of the vacuole. May exist as structural reinforcement on the surface of the vacuolar membrane and be required for maintenance against rupture by osmotic pressure. This Schizosaccharomyces pombe (strain 972 / ATCC 24843) (Fission yeast) protein is Vacuolar morphogenesis protein 7 homolog.